The following is a 262-amino-acid chain: 5'-nucleotidase SurE (262 aa).

4 residues coordinate a divalent metal cation: Asp9, Asp10, Ser40, and Asn95.

This sequence belongs to the SurE nucleotidase family. The cofactor is a divalent metal cation.

The protein localises to the cytoplasm. It carries out the reaction a ribonucleoside 5'-phosphate + H2O = a ribonucleoside + phosphate. Its function is as follows. Nucleotidase that shows phosphatase activity on nucleoside 5'-monophosphates. The chain is 5'-nucleotidase SurE from Aliarcobacter butzleri (strain RM4018) (Arcobacter butzleri).